A 451-amino-acid polypeptide reads, in one-letter code: Crh-like protein 2 (451 aa).

The signal sequence occupies residues 1-21 (MQFNSLVLLAGATILSPFVQA). The GH16 domain occupies 22–241 (QTWTTCNPLN…FTKVPFTMYV (220 aa)). Residues C27 and C34 are joined by a disulfide bond. N31, N43, N49, and N59 each carry an N-linked (GlcNAc...) asparagine glycan. E121 acts as the Nucleophile in catalysis. The active-site Proton donor is E125. E125 contacts chitin. N130, N143, and N165 each carry an N-linked (GlcNAc...) asparagine glycan. The chitin site is built by R206, W210, and T222. An N-linked (GlcNAc...) asparagine glycan is attached at N273. The chain crosses the membrane as a helical span at residues 305–325 (VYCGGGAAVAALVSAFLFTFL). A glycan (N-linked (GlcNAc...) asparagine) is linked at N366.

It belongs to the glycosyl hydrolase 16 family. CRH1 subfamily. As to quaternary structure, forms homodimers as well as heterodimers with other crh protein members crh1 and crh3. Dimerization may be necessary for the transglycosylation activity.

It is found in the membrane. The enzyme catalyses Random endo-hydrolysis of N-acetyl-beta-D-glucosaminide (1-&gt;4)-beta-linkages in chitin and chitodextrins.. Its function is as follows. Dual chitinase/transglycosylase that plays a role in cell wall architecture. Chitinase and transglycosylase activities are coupled. Required for the polysaccharide cross-linking at the septa and the cell wall. More specifically, transfers chitin to 1,6-beta-glucan in the cell wall. The chain is Crh-like protein 2 from Botryotinia fuckeliana (strain B05.10) (Noble rot fungus).